Reading from the N-terminus, the 136-residue chain is MLQPKRTKFRKTFKGRNRGLANGTDVSFGTFGLKAVGRGRLTARQIEAARRAMTRHVKRQGQIWIRVFPDKPITSKPLEVRQGKGKGNVEYWVAQIQPGKVLYEMDGVPEVLAREAFNLAARKLPIKTTFVIKAVM.

This sequence belongs to the universal ribosomal protein uL16 family. As to quaternary structure, part of the 50S ribosomal subunit.

In terms of biological role, binds 23S rRNA and is also seen to make contacts with the A and possibly P site tRNAs. In Photobacterium profundum (strain SS9), this protein is Large ribosomal subunit protein uL16.